Consider the following 436-residue polypeptide: Putative F-box/FBD/LRR-repeat protein At5g44960 (436 aa).

The F-box domain maps to 4 to 50; the sequence is CDYINELPDSLLTQILLDLRTKDSVKTSVSSKRWRNLWLNVPGLDLF. LRR repeat units follow at residues 287 to 310 and 397 to 420; these read ISSVRHMIISGSILEELHSYSKLG and SAVLKKLTLRFSFFSSIESESYKK. Positions 355 to 407 constitute an FBD domain; sequence EENIDFHEVPQCLISTLEYVHINKLMMMEQSGIKLVNYFIENSAVLKKLTLRF.

The protein is Putative F-box/FBD/LRR-repeat protein At5g44960 of Arabidopsis thaliana (Mouse-ear cress).